Reading from the N-terminus, the 428-residue chain is Peptidase B (428 aa).

Mn(2+)-binding residues include lysine 195 and aspartate 200. Lysine 207 is an active-site residue. Residues aspartate 218, aspartate 277, and glutamate 279 each contribute to the Mn(2+) site. Residue arginine 281 is part of the active site.

Belongs to the peptidase M17 family. In terms of assembly, homohexamer. Mn(2+) serves as cofactor.

It localises to the cytoplasm. The enzyme catalyses Release of an N-terminal amino acid, Xaa, from a peptide or arylamide. Xaa is preferably Glu or Asp but may be other amino acids, including Leu, Met, His, Cys and Gln.. In terms of biological role, probably plays an important role in intracellular peptide degradation. The protein is Peptidase B of Enterobacter sp. (strain 638).